The following is a 236-amino-acid chain: Peptidase E (236 aa).

Residues serine 122, aspartate 137, and histidine 159 each act as charge relay system in the active site.

It belongs to the peptidase S51 family.

It localises to the cytoplasm. It carries out the reaction Dipeptidase E catalyzes the hydrolysis of dipeptides Asp-|-Xaa. It does not act on peptides with N-terminal Glu, Asn or Gln, nor does it cleave isoaspartyl peptides.. Its function is as follows. Hydrolyzes dipeptides containing N-terminal aspartate residues. May play a role in allowing the cell to use peptide aspartate to spare carbon otherwise required for the synthesis of the aspartate family of amino acids. This Shewanella sp. (strain W3-18-1) protein is Peptidase E.